A 255-amino-acid chain; its full sequence is Ornithine decarboxylase antizyme (255 aa).

The protein belongs to the ODC antizyme family. Interacts with ODC and thereby sterically blocks ODC homodimerization.

Its function is as follows. Ornithine decarboxylase (ODC) antizyme protein that negatively regulates ODC activity and intracellular polyamine biosynthesis in response to increased intracellular polyamine levels. Binds to ODC monomers, inhibiting the assembly of the functional ODC homodimer, and targets the monomers for ubiquitin-independent proteolytic destruction by the 26S proteasome. The protein is Ornithine decarboxylase antizyme (OAZ1) of Eremothecium gossypii (strain ATCC 10895 / CBS 109.51 / FGSC 9923 / NRRL Y-1056) (Yeast).